The primary structure comprises 466 residues: Glutamate decarboxylase beta (466 aa).

Substrate-binding residues include T62 and N83. Pyridoxal 5'-phosphate-binding positions include 126-127 (SS), T212, and H275. K276 bears the N6-(pyridoxal phosphate)lysine mark. K446, K453, and K464 each carry N6-acetyllysine.

It belongs to the group II decarboxylase family. In terms of assembly, homohexamer composed of three dimers. Requires pyridoxal 5'-phosphate as cofactor.

It catalyses the reaction L-glutamate + H(+) = 4-aminobutanoate + CO2. Converts glutamate to gamma-aminobutyrate (GABA), consuming one intracellular proton in the reaction. The gad system helps to maintain a near-neutral intracellular pH when cells are exposed to extremely acidic conditions. The ability to survive transit through the acidic conditions of the stomach is essential for successful colonization of the mammalian host by commensal and pathogenic bacteria. This is Glutamate decarboxylase beta (gadB) from Shigella flexneri.